Reading from the N-terminus, the 300-residue chain is Acetylglutamate kinase (300 aa).

Residues 68 to 69, Arg-90, and Asn-195 contribute to the substrate site; that span reads GG.

This sequence belongs to the acetylglutamate kinase family. ArgB subfamily.

The protein resides in the cytoplasm. The enzyme catalyses N-acetyl-L-glutamate + ATP = N-acetyl-L-glutamyl 5-phosphate + ADP. The protein operates within amino-acid biosynthesis; L-arginine biosynthesis; N(2)-acetyl-L-ornithine from L-glutamate: step 2/4. Functionally, catalyzes the ATP-dependent phosphorylation of N-acetyl-L-glutamate. The polypeptide is Acetylglutamate kinase (Azotobacter vinelandii (strain DJ / ATCC BAA-1303)).